The chain runs to 246 residues: Proteasome subunit alpha type-6 (246 aa).

Belongs to the peptidase T1A family. The 26S proteasome consists of a 20S proteasome core and two 19S regulatory subunits. The 20S proteasome core is composed of 28 subunits that are arranged in four stacked rings, resulting in a barrel-shaped structure. The two end rings are each formed by seven alpha subunits, and the two central rings are each formed by seven beta subunits. The catalytic chamber with the active sites is on the inside of the barrel.

Its subcellular location is the cytoplasm. The protein localises to the nucleus. In terms of biological role, the proteasome is a multicatalytic proteinase complex which is characterized by its ability to cleave peptides with Arg, Phe, Tyr, Leu, and Glu adjacent to the leaving group at neutral or slightly basic pH. The proteasome has an ATP-dependent proteolytic activity. This chain is Proteasome subunit alpha type-6 (pas-1), found in Caenorhabditis elegans.